Reading from the N-terminus, the 293-residue chain is Lipoyl synthase (293 aa).

[4Fe-4S] cluster is bound by residues cysteine 47, cysteine 52, cysteine 58, cysteine 73, cysteine 77, cysteine 80, and serine 285. A Radical SAM core domain is found at 59–274 (WSEGTATFMI…EKIGLELGFR (216 aa)).

It belongs to the radical SAM superfamily. Lipoyl synthase family. [4Fe-4S] cluster is required as a cofactor.

The protein resides in the cytoplasm. It catalyses the reaction [[Fe-S] cluster scaffold protein carrying a second [4Fe-4S](2+) cluster] + N(6)-octanoyl-L-lysyl-[protein] + 2 oxidized [2Fe-2S]-[ferredoxin] + 2 S-adenosyl-L-methionine + 4 H(+) = [[Fe-S] cluster scaffold protein] + N(6)-[(R)-dihydrolipoyl]-L-lysyl-[protein] + 4 Fe(3+) + 2 hydrogen sulfide + 2 5'-deoxyadenosine + 2 L-methionine + 2 reduced [2Fe-2S]-[ferredoxin]. Its pathway is protein modification; protein lipoylation via endogenous pathway; protein N(6)-(lipoyl)lysine from octanoyl-[acyl-carrier-protein]: step 2/2. Its function is as follows. Catalyzes the radical-mediated insertion of two sulfur atoms into the C-6 and C-8 positions of the octanoyl moiety bound to the lipoyl domains of lipoate-dependent enzymes, thereby converting the octanoylated domains into lipoylated derivatives. The sequence is that of Lipoyl synthase from Christiangramia forsetii (strain DSM 17595 / CGMCC 1.15422 / KT0803) (Gramella forsetii).